An 875-amino-acid chain; its full sequence is Kelch-like protein 29 (875 aa).

The segment covering 115–126 has biased composition (polar residues); that stretch reads WGQTPINQSTPW. 2 disordered regions span residues 115–145 and 248–291; these read WGQT…PGTG and GPTA…DSAH. Basic and acidic residues predominate over residues 131–140; the sequence is PPSKQMRESD. Residues 329–401 enclose the BTB domain; the sequence is TDLKIVVEGR…VYTGSLVIDS (73 aa). Kelch repeat units follow at residues 585–635, 637–683, 684–730, 732–778, 779–821, and 822–870; these read VIVL…VSAG, NIYL…VYDG, KIYT…VCGG, IYVF…TLNG, FVFI…VLDG, and KIYA…VIKK.

This chain is Kelch-like protein 29 (KLHL29), found in Homo sapiens (Human).